The sequence spans 387 residues: Cyclin-J-like protein (387 aa).

In terms of domain architecture, Cyclin N-terminal spans 13–142; sequence DVHCTLREKE…LLEAFSWDLC (130 aa).

The protein belongs to the cyclin family. Cyclin J subfamily.

The protein is Cyclin-J-like protein (Ccnjl) of Mus musculus (Mouse).